The primary structure comprises 1235 residues: DNA polymerase catalytic subunit (1235 aa).

Disordered regions lie at residues Gln640–Arg692 and Ala1098–Pro1134. A compositionally biased stretch (basic and acidic residues) spans Ala650 to Glu661. The segment covering Glu662 to Glu675 has biased composition (acidic residues). A compositionally biased stretch (basic and acidic residues) spans Glu676–Gly691.

Belongs to the DNA polymerase type-B family. As to quaternary structure, forms a complex with the ssDNA-binding protein UL29, the DNA polymerase processivity factor, and the alkaline exonuclease. Interacts with the putative helicase-primase complex subunit UL8; this interaction may coordinate leading and lagging strand DNA synthesis at the replication fork.

It localises to the host nucleus. The catalysed reaction is DNA(n) + a 2'-deoxyribonucleoside 5'-triphosphate = DNA(n+1) + diphosphate. It catalyses the reaction Endonucleolytic cleavage to 5'-phosphomonoester.. In terms of biological role, replicates viral genomic DNA. The replication complex is composed of six viral proteins: the DNA polymerase, processivity factor, primase, primase-associated factor, helicase, and ssDNA-binding protein. Additionally, the polymerase contains an intrinsic ribonuclease H (RNase H) activity that specifically degrades RNA/DNA heteroduplexes or duplex DNA substrates in the 5' to 3' direction. Therefore, it can catalyze the excision of the RNA primers that initiate the synthesis of Okazaki fragments at a replication fork during viral DNA replication. The protein is DNA polymerase catalytic subunit of Homo sapiens (Human).